Reading from the N-terminus, the 203-residue chain is Outer-membrane lipoprotein LolB (203 aa).

Positions 1 to 17 (MNRLFRLLPLASLVLTA) are cleaved as a signal peptide. Cys18 is lipidated: N-palmitoyl cysteine. Cys18 is lipidated: S-diacylglycerol cysteine.

The protein belongs to the LolB family. As to quaternary structure, monomer.

The protein localises to the cell outer membrane. In terms of biological role, plays a critical role in the incorporation of lipoproteins in the outer membrane after they are released by the LolA protein. The polypeptide is Outer-membrane lipoprotein LolB (Klebsiella pneumoniae subsp. pneumoniae (strain ATCC 700721 / MGH 78578)).